The chain runs to 218 residues: Adenylate kinase (218 aa).

10–15 (GAGKGT) contributes to the ATP binding site. Residues 30–59 (STGDMLRAAVKAGTPLGLEAKAIMDAGGLV) form an NMP region. AMP contacts are provided by residues T31, R36, 57–59 (GLV), 85–88 (GFPR), and Q92. The LID stretch occupies residues 122 to 159 (GRRVHLASGRTYHVTFNPPKAAGKDDVTGEDLVQRDDD). ATP-binding positions include R123 and 132–133 (TY). AMP-binding residues include R156 and R167. R203 is an ATP binding site.

Belongs to the adenylate kinase family. Monomer.

It localises to the cytoplasm. It catalyses the reaction AMP + ATP = 2 ADP. Its pathway is purine metabolism; AMP biosynthesis via salvage pathway; AMP from ADP: step 1/1. Functionally, catalyzes the reversible transfer of the terminal phosphate group between ATP and AMP. Plays an important role in cellular energy homeostasis and in adenine nucleotide metabolism. This is Adenylate kinase from Chromobacterium violaceum (strain ATCC 12472 / DSM 30191 / JCM 1249 / CCUG 213 / NBRC 12614 / NCIMB 9131 / NCTC 9757 / MK).